The primary structure comprises 561 residues: Excitatory amino acid transporter 4 (561 aa).

The Cytoplasmic portion of the chain corresponds to M1–R52. The residue at position 2 (S2) is a Phosphoserine. 3 helical membrane passes run N53–L73, M96–L116, and V130–I150. N-linked (GlcNAc...) asparagine glycosylation is found at N213, N229, and N236. A run of 3 helical transmembrane segments spans residues S259–M282, F292–I319, and L341–V362. Residues F368–L398 constitute an intramembrane region (discontinuously helical). S385–S387 is an L-aspartate binding site. Residues I408–F434 traverse the membrane as a helical segment. Na(+) contacts are provided by G416, T418, and N420. Residues T424, I465–G469, D498, and N505 contribute to the L-aspartate site. Positions I448 to G481 form an intramembrane region, discontinuously helical. A helical membrane pass occupies residues W495 to I516. Residues N505 and D509 each coordinate Na(+).

Belongs to the dicarboxylate/amino acid:cation symporter (DAACS) (TC 2.A.23) family. SLC1A6 subfamily. In terms of assembly, homotrimer.

The protein localises to the cell membrane. It carries out the reaction K(+)(in) + L-glutamate(out) + 3 Na(+)(out) + H(+)(out) = K(+)(out) + L-glutamate(in) + 3 Na(+)(in) + H(+)(in). It catalyses the reaction K(+)(in) + L-aspartate(out) + 3 Na(+)(out) + H(+)(out) = K(+)(out) + L-aspartate(in) + 3 Na(+)(in) + H(+)(in). The catalysed reaction is D-aspartate(out) + K(+)(in) + 3 Na(+)(out) + H(+)(out) = D-aspartate(in) + K(+)(out) + 3 Na(+)(in) + H(+)(in). Functionally, sodium-dependent, high-affinity amino acid transporter that mediates the uptake of L-glutamate and also L-aspartate and D-aspartate. Functions as a symporter that transports one amino acid molecule together with two or three Na(+) ions and one proton, in parallel with the counter-transport of one K(+) ion. Mediates Cl(-) flux that is not coupled to amino acid transport; this avoids the accumulation of negative charges due to aspartate and Na(+) symport. Plays a redundant role in the rapid removal of released glutamate from the synaptic cleft, which is essential for terminating the postsynaptic action of glutamate. The chain is Excitatory amino acid transporter 4 (Slc1a6) from Rattus norvegicus (Rat).